Here is a 433-residue protein sequence, read N- to C-terminus: Histidinol dehydrogenase (433 aa).

3 residues coordinate NAD(+): tyrosine 133, glutamine 194, and asparagine 217. Substrate-binding residues include serine 240, glutamine 262, and histidine 265. The Zn(2+) site is built by glutamine 262 and histidine 265. Catalysis depends on proton acceptor residues glutamate 330 and histidine 331. Histidine 331, aspartate 364, glutamate 418, and histidine 423 together coordinate substrate. Aspartate 364 lines the Zn(2+) pocket. Residue histidine 423 coordinates Zn(2+).

The protein belongs to the histidinol dehydrogenase family. Requires Zn(2+) as cofactor.

The catalysed reaction is L-histidinol + 2 NAD(+) + H2O = L-histidine + 2 NADH + 3 H(+). The protein operates within amino-acid biosynthesis; L-histidine biosynthesis; L-histidine from 5-phospho-alpha-D-ribose 1-diphosphate: step 9/9. In terms of biological role, catalyzes the sequential NAD-dependent oxidations of L-histidinol to L-histidinaldehyde and then to L-histidine. This chain is Histidinol dehydrogenase, found in Dechloromonas aromatica (strain RCB).